We begin with the raw amino-acid sequence, 382 residues long: Lipid-A-disaccharide synthase (382 aa).

It belongs to the LpxB family.

The catalysed reaction is 2-N,3-O-bis[(3R)-3-hydroxytetradecanoyl]-alpha-D-glucosaminyl 1-phosphate + UDP-2-N,3-O-bis[(3R)-3-hydroxytetradecanoyl]-alpha-D-glucosamine = lipid A disaccharide (E. coli) + UDP + H(+). It carries out the reaction a lipid X + a UDP-2-N,3-O-bis[(3R)-3-hydroxyacyl]-alpha-D-glucosamine = a lipid A disaccharide + UDP + H(+). It functions in the pathway glycolipid biosynthesis; lipid IV(A) biosynthesis; lipid IV(A) from (3R)-3-hydroxytetradecanoyl-[acyl-carrier-protein] and UDP-N-acetyl-alpha-D-glucosamine: step 5/6. Its function is as follows. Condensation of UDP-2,3-diacylglucosamine and 2,3-diacylglucosamine-1-phosphate to form lipid A disaccharide, a precursor of lipid A, a phosphorylated glycolipid that anchors the lipopolysaccharide to the outer membrane of the cell. The polypeptide is Lipid-A-disaccharide synthase (Salmonella paratyphi B (strain ATCC BAA-1250 / SPB7)).